The primary structure comprises 172 residues: Early E3 18.5 kDa glycoprotein (172 aa).

The first 19 residues, 1–19 (MGAILVVLALLSLLGLGSA), serve as a signal peptide directing secretion. The Lumenal portion of the chain corresponds to 20–136 (NLNPLDHDPC…SKENIVAFSI (117 aa)). N-linked (GlcNAc...) asparagine; by host glycosylation is present at Asn-36. Disulfide bonds link Cys-37–Cys-55 and Cys-49–Cys-111. N-linked (GlcNAc...) asparagine; by host glycosylation is found at Asn-68, Asn-72, and Asn-102. Residues 137–157 (AYCLVTCIITAIICVCIHLLI) traverse the membrane as a helical segment. Residues 158-172 (VIRPRQSNEEKEKMP) are Cytoplasmic-facing. Residues 168-172 (KEKMP) carry the Di-lysine motif motif.

This sequence belongs to the adenoviridae E19 family. In terms of processing, both disulfide bonds are absolutely critical for the interaction with MHC antigens. N-glycosylated; high-mannose.

Its subcellular location is the host endoplasmic reticulum membrane. In terms of biological role, binds and retains class I heavy chains in the endoplasmic reticulum during the early period of virus infection, thereby impairing their transport to the cell surface. Also delays the expression of class I alleles that it cannot affect by direct retention. Binds transporters associated with antigen processing (TAP) and acts as a tapasin inhibitor, preventing class I/TAP association. In consequence, infected cells are masked for immune recognition by cytotoxic T-lymphocytes. This chain is Early E3 18.5 kDa glycoprotein, found in Human adenovirus B serotype 3 (HAdV-3).